Consider the following 416-residue polypeptide: Exodeoxyribonuclease 7 large subunit (416 aa).

The protein belongs to the XseA family. In terms of assembly, heterooligomer composed of large and small subunits.

Its subcellular location is the cytoplasm. The catalysed reaction is Exonucleolytic cleavage in either 5'- to 3'- or 3'- to 5'-direction to yield nucleoside 5'-phosphates.. Bidirectionally degrades single-stranded DNA into large acid-insoluble oligonucleotides, which are then degraded further into small acid-soluble oligonucleotides. In Acidothermus cellulolyticus (strain ATCC 43068 / DSM 8971 / 11B), this protein is Exodeoxyribonuclease 7 large subunit.